We begin with the raw amino-acid sequence, 67 residues long: Large ribosomal subunit protein uL29 (67 aa).

This sequence belongs to the universal ribosomal protein uL29 family.

The protein is Large ribosomal subunit protein uL29 of Ruminiclostridium cellulolyticum (strain ATCC 35319 / DSM 5812 / JCM 6584 / H10) (Clostridium cellulolyticum).